The primary structure comprises 150 residues: 3-dehydroquinate dehydratase (150 aa).

Residue Tyr-26 is the Proton acceptor of the active site. Residues Asn-77, His-83, and Asp-90 each coordinate substrate. His-103 acts as the Proton donor in catalysis. Substrate-binding positions include 104 to 105 (LS) and Arg-114.

Belongs to the type-II 3-dehydroquinase family. In terms of assembly, homododecamer.

The catalysed reaction is 3-dehydroquinate = 3-dehydroshikimate + H2O. Its pathway is metabolic intermediate biosynthesis; chorismate biosynthesis; chorismate from D-erythrose 4-phosphate and phosphoenolpyruvate: step 3/7. Its function is as follows. Catalyzes a trans-dehydration via an enolate intermediate. The polypeptide is 3-dehydroquinate dehydratase (Photobacterium profundum (strain SS9)).